A 665-amino-acid chain; its full sequence is Cinnamate reductase (665 aa).

Residue Gln-109 participates in FMN binding. The active-site Proton donor is the Tyr-182. Residues Arg-230, Arg-319, and 341–342 (GR) contribute to the FMN site. Residues Cys-365, Cys-368, Cys-372, and Cys-384 each contribute to the [4Fe-4S] cluster site. Residues Ala-415, Glu-434, Asn-442, Lys-452, and Ala-479 each coordinate FAD.

It in the N-terminal section; belongs to the NADH:flavin oxidoreductase/NADH oxidase family. Requires FMN as cofactor. FAD serves as cofactor. It depends on [4Fe-4S] cluster as a cofactor.

It catalyses the reaction 3-phenylpropanoate + NAD(+) = (E)-cinnamate + NADH + H(+). It functions in the pathway amino-acid degradation; L-phenylalanine degradation. Involved in the fermentation of L-phenylalanine via a Stickland reaction. Catalyzes the reduction of (E)-cinnamate to yield 3-phenylpropionate. The sequence is that of Cinnamate reductase from Clostridium sporogenes (strain ATCC 7955 / DSM 767 / NBRC 16411 / NCIMB 8053 / NCTC 8594 / PA 3679).